The primary structure comprises 727 residues: Broad-complex core protein isoforms 1/2/3/4/5 (727 aa).

Residues 32-97 (VDVTLACEGR…IYHGEVNVHQ (66 aa)) form the BTB domain. Positions 135–149 (NSGGRTPLNTHTQSL) are enriched in polar residues. Disordered regions lie at residues 135 to 185 (NSGG…SLPS), 218 to 378 (RGSD…IGDG), 445 to 496 (INNS…RPTA), 532 to 583 (PQQQ…ANTP), and 604 to 626 (STSGSANSSLNNSNSTLNTSGGL). Residues 227–238 (SGAVGSGSNNNS) are compositionally biased toward low complexity. Residues 281 to 298 (TGNGNSGNGNGNGNGASN) show a composition bias toward gly residues. Residues 341 to 355 (NDEHSNDSTGEHDAN) are compositionally biased toward basic and acidic residues. Composition is skewed to low complexity over residues 445 to 460 (INNSITNNNNNNNNNN), 475 to 495 (TPSPTTTTLTTPTTTTPTRPT), and 533 to 568 (QQQQQQQQQHQMSQQQQQQQQQQQQQGNSSSGQQQQ). 2 consecutive C2H2-type zinc fingers follow at residues 636-659 (FRCNPCNKNLSSLTRLKRHIQNVH) and 666-689 (PVCNICKRVYSSLNSLRNHKSIYH). The disordered stretch occupies residues 694–727 (QPKQEPGVGATQAAANSFYHQQHQQQQLNHHSSS). The segment covering 713–727 (HQQHQQQQLNHHSSS) has biased composition (low complexity).

Its subcellular location is the nucleus. Functionally, broad-complex proteins are required for puffing and transcription of salivary gland late genes during metamorphosis. This is Broad-complex core protein isoforms 1/2/3/4/5 (br) from Drosophila melanogaster (Fruit fly).